A 74-amino-acid polypeptide reads, in one-letter code: Mucroporin (74 aa).

The signal sequence occupies residues 1–22; that stretch reads MKVKFLLAVFLIVLVVTDHCHA. K39 is subject to Lysine amide. A propeptide spanning residues 45 to 74 is cleaved from the precursor; sequence QMEARFEPQNRNYRKRELDLEKLFANMPDY.

The protein belongs to the non-disulfide-bridged peptide (NDBP) superfamily. Short antimicrobial peptide (group 4) family. Expressed by the venom gland.

Its subcellular location is the secreted. It is found in the target cell membrane. In terms of biological role, mucroporin: cationic host defense peptide that have antibacterial activity by breaking membranes. Is more effective on Gram-positive than on Gram-negative bacteria. Minimum inhibitory concentrations (MIC) are the following: MIC=&gt;100 ug/ml against E.coli AB94012, MIC=&gt;100 ug/ml against P.aeruginosa AB93066, MIC=25 ug/ml against B.thuringiensis AB92037, MIC=50 ug/ml against B.subtilis AB91021, MIC=25 ug/ml against S.aureus AB94004, and MIC=25 ug/ml against the methicillin-resistant coagulase-negative Staphylococcus. Its synthetic analog mucroporin-M1 is more effective. Does not show antiviral activity against any of measles, SARS-CoV, influenza H5N1, hepatitis B and HIV-1 viruses. Functionally, mutant mucroporin-M1: can inhibit Gram-positive bacteria at low concentrations and antibiotic-resistant pathogens. Minimum inhibitory concentrations (MIC) are the following: MIC=12.5 ug/ml against E.coli AB94012, MIC=100 ug/ml against P.aeruginosa AB93066, MIC=25 ug/ml against B.thuringiensis AB92037, MIC=25 ug/ml against B.subtilis AB91021, MIC=5 ug/ml against S.aureus AB94004, and MIC=5 ug/ml against the methicillin-resistant coagulase-negative Staphylococcus. Also shows antiviral activities against measles (EC(50) of 7.15 ug/ml), SARS-CoV (EC(50) of 14.46 ug/ml), influenza H5N1 viruses (EC(50) of 2.10 mug/ml), HIV-1, and hepatitis B virus. This Lychas mucronatus (Chinese swimming scorpion) protein is Mucroporin.